The sequence spans 212 residues: Inner membrane-spanning protein YciB (212 aa).

The next 5 membrane-spanning stretches (helical) occupy residues 49-69, 78-98, 105-125, 150-170, and 178-198; these read APVL…VLYL, TMLW…IWFH, WKPS…PIVA, LAWA…AYNF, and FKAF…GLYM.

This sequence belongs to the YciB family.

The protein localises to the cell inner membrane. Plays a role in cell envelope biogenesis, maintenance of cell envelope integrity and membrane homeostasis. The sequence is that of Inner membrane-spanning protein YciB from Leptothrix cholodnii (strain ATCC 51168 / LMG 8142 / SP-6) (Leptothrix discophora (strain SP-6)).